The chain runs to 532 residues: 2,3-bisphosphoglycerate-independent phosphoglycerate mutase (532 aa).

Residues Asp-15 and Ser-65 each coordinate Mn(2+). Ser-65 functions as the Phosphoserine intermediate in the catalytic mechanism. Residues His-126, 156 to 157 (RD), Arg-188, Arg-194, 258 to 261 (RPDR), and Lys-331 each bind substrate. Positions 398, 402, 439, 440, and 457 each coordinate Mn(2+).

It belongs to the BPG-independent phosphoglycerate mutase family. As to quaternary structure, monomer. Mn(2+) serves as cofactor.

It carries out the reaction (2R)-2-phosphoglycerate = (2R)-3-phosphoglycerate. It functions in the pathway carbohydrate degradation; glycolysis; pyruvate from D-glyceraldehyde 3-phosphate: step 3/5. Catalyzes the interconversion of 2-phosphoglycerate and 3-phosphoglycerate. This is 2,3-bisphosphoglycerate-independent phosphoglycerate mutase from Cyanothece sp. (strain PCC 7425 / ATCC 29141).